Consider the following 270-residue polypeptide: Endonuclease 4 (270 aa).

Zn(2+) is bound by residues His-69, His-108, Glu-139, Asp-169, His-172, His-204, Asp-217, His-219, and Glu-248.

It belongs to the AP endonuclease 2 family. Zn(2+) is required as a cofactor.

The catalysed reaction is Endonucleolytic cleavage to 5'-phosphooligonucleotide end-products.. Its function is as follows. Endonuclease IV plays a role in DNA repair. It cleaves phosphodiester bonds at apurinic or apyrimidinic (AP) sites, generating a 3'-hydroxyl group and a 5'-terminal sugar phosphate. In addition, possesses a 3'-5' exonuclease activity. The chain is Endonuclease 4 from Thermus thermophilus (strain ATCC BAA-163 / DSM 7039 / HB27).